The primary structure comprises 326 residues: Putative ribose-phosphate pyrophosphokinase 2 (326 aa).

Residues 43-45 (DGE) and 102-103 (RQ) contribute to the ATP site. Histidine 136 is a binding site for Mg(2+). D-ribose 5-phosphate-binding positions include aspartate 225 and 229-233 (NTGKT).

This sequence belongs to the ribose-phosphate pyrophosphokinase family. Class I subfamily. As to quaternary structure, homohexamer. Mg(2+) serves as cofactor.

It is found in the cytoplasm. The catalysed reaction is D-ribose 5-phosphate + ATP = 5-phospho-alpha-D-ribose 1-diphosphate + AMP + H(+). It functions in the pathway metabolic intermediate biosynthesis; 5-phospho-alpha-D-ribose 1-diphosphate biosynthesis; 5-phospho-alpha-D-ribose 1-diphosphate from D-ribose 5-phosphate (route I): step 1/1. Involved in the biosynthesis of the central metabolite phospho-alpha-D-ribosyl-1-pyrophosphate (PRPP) via the transfer of pyrophosphoryl group from ATP to 1-hydroxyl of ribose-5-phosphate (Rib-5-P). The sequence is that of Putative ribose-phosphate pyrophosphokinase 2 from Streptococcus pyogenes serotype M3 (strain SSI-1).